A 380-amino-acid polypeptide reads, in one-letter code: MYLKTLHLSAFRNYREQQIEFDHQKTILLGNNAQGKSNVLEAVELLATLKSHRTNRDRDFILEGETIGQITAKIERNYGTSDLAITLRSPGRRTLTLNHEHLRRHLEFLGSLNAVQFSSLDLDLVRGSPDARRNWLDTLLVQLEPIYAHILQQYYQVLRQRNALLKDLRKTATEEGKSDHLSAQMTQLHLWDQQLAETGSRVTRRRARVIERLIPLAQIWHQNISGGQEILQIDYLPNVSWQEDEPLEVQQAFLAKIEQRRLAEQQLGTTVVGPHRDDVEFTINGTPAKSYGSQGQQRTLVLALKLAELKLIEEVIGEPPLLLLDDVLAELDPNRQNQLLEVIQGRFQTFITTTYLHSFDAQWLQSSQILKVEAGKIHPC.

30-37 (GNNAQGKS) is an ATP binding site.

This sequence belongs to the RecF family.

It is found in the cytoplasm. Its function is as follows. The RecF protein is involved in DNA metabolism; it is required for DNA replication and normal SOS inducibility. RecF binds preferentially to single-stranded, linear DNA. It also seems to bind ATP. This chain is DNA replication and repair protein RecF, found in Rippkaea orientalis (strain PCC 8801 / RF-1) (Cyanothece sp. (strain PCC 8801)).